A 196-amino-acid polypeptide reads, in one-letter code: Pyridoxal 5'-phosphate synthase subunit PdxT (196 aa).

46–48 (GES) is a binding site for L-glutamine. The active-site Nucleophile is the cysteine 78. L-glutamine-binding positions include arginine 110 and 138 to 139 (IR). Catalysis depends on charge relay system residues histidine 174 and glutamate 176.

The protein belongs to the glutaminase PdxT/SNO family. In the presence of PdxS, forms a dodecamer of heterodimers. Only shows activity in the heterodimer.

The enzyme catalyses aldehydo-D-ribose 5-phosphate + D-glyceraldehyde 3-phosphate + L-glutamine = pyridoxal 5'-phosphate + L-glutamate + phosphate + 3 H2O + H(+). It catalyses the reaction L-glutamine + H2O = L-glutamate + NH4(+). Its pathway is cofactor biosynthesis; pyridoxal 5'-phosphate biosynthesis. Catalyzes the hydrolysis of glutamine to glutamate and ammonia as part of the biosynthesis of pyridoxal 5'-phosphate. The resulting ammonia molecule is channeled to the active site of PdxS. The polypeptide is Pyridoxal 5'-phosphate synthase subunit PdxT (Deinococcus radiodurans (strain ATCC 13939 / DSM 20539 / JCM 16871 / CCUG 27074 / LMG 4051 / NBRC 15346 / NCIMB 9279 / VKM B-1422 / R1)).